The following is a 159-amino-acid chain: Ribosomal RNA large subunit methyltransferase H (159 aa).

Residues Leu76, Gly108, and 127–132 (FSKMTF) contribute to the S-adenosyl-L-methionine site.

Belongs to the RNA methyltransferase RlmH family. In terms of assembly, homodimer.

It is found in the cytoplasm. The enzyme catalyses pseudouridine(1915) in 23S rRNA + S-adenosyl-L-methionine = N(3)-methylpseudouridine(1915) in 23S rRNA + S-adenosyl-L-homocysteine + H(+). In terms of biological role, specifically methylates the pseudouridine at position 1915 (m3Psi1915) in 23S rRNA. This Clostridium botulinum (strain Alaska E43 / Type E3) protein is Ribosomal RNA large subunit methyltransferase H.